The following is a 253-amino-acid chain: Phosphate import ATP-binding protein PstB (253 aa).

In terms of domain architecture, ABC transporter spans 5–248 (IETINLHVYY…PEHELTEKYV (244 aa)). Residue 37 to 44 (GPSGCGKS) participates in ATP binding.

This sequence belongs to the ABC transporter superfamily. Phosphate importer (TC 3.A.1.7) family. The complex is composed of two ATP-binding proteins (PstB), two transmembrane proteins (PstC and PstA) and a solute-binding protein (PstS).

It is found in the cell membrane. It carries out the reaction phosphate(out) + ATP + H2O = ADP + 2 phosphate(in) + H(+). Functionally, part of the ABC transporter complex PstSACB involved in phosphate import. Responsible for energy coupling to the transport system. This Pyrococcus furiosus (strain ATCC 43587 / DSM 3638 / JCM 8422 / Vc1) protein is Phosphate import ATP-binding protein PstB.